A 130-amino-acid polypeptide reads, in one-letter code: uncharacterized protein (130 aa).

The first 20 residues, 1 to 20, serve as a signal peptide directing secretion; the sequence is MFNCLTKLVILVCLKYVAKA.

This is an uncharacterized protein from Saccharomyces cerevisiae (strain ATCC 204508 / S288c) (Baker's yeast).